The sequence spans 875 residues: Phosphoenolpyruvate carboxylase (875 aa).

Active-site residues include His-137 and Lys-542.

The protein belongs to the PEPCase type 1 family. Mg(2+) serves as cofactor.

The enzyme catalyses oxaloacetate + phosphate = phosphoenolpyruvate + hydrogencarbonate. Functionally, forms oxaloacetate, a four-carbon dicarboxylic acid source for the tricarboxylic acid cycle. This chain is Phosphoenolpyruvate carboxylase, found in Pseudomonas entomophila (strain L48).